The sequence spans 205 residues: Small ribosomal subunit protein uS4 (205 aa).

The disordered stretch occupies residues 20–44 (WGRPKSPVNRREYGPGQHGQRRKGK). The 61-residue stretch at 94–154 (SRLDAIVYRS…ERSKQLLLVL (61 aa)) folds into the S4 RNA-binding domain.

It belongs to the universal ribosomal protein uS4 family. In terms of assembly, part of the 30S ribosomal subunit. Contacts protein S5. The interaction surface between S4 and S5 is involved in control of translational fidelity.

Its function is as follows. One of the primary rRNA binding proteins, it binds directly to 16S rRNA where it nucleates assembly of the body of the 30S subunit. Functionally, with S5 and S12 plays an important role in translational accuracy. This Bartonella bacilliformis (strain ATCC 35685 / KC583 / Herrer 020/F12,63) protein is Small ribosomal subunit protein uS4.